The chain runs to 346 residues: MIELKNVSKVFTTKKGNVEALKSTSLQVKKGEVFGIIGYSGAGKSTLIRCVNLLEKPTTGNIIVNEQDLTTLSTKELAKARQKIGMIFQGFNLLKTVTVYENIALPLRLAGVPKLEIEKRVEKYLRIVDLFNRKDAYPSELSGGQKQRVAIARALSHEPEVLLSDEATSALDPETTDSILDLLLKINEEIGITILLITHEMNVIQRICDRVAVMEHGAVVESGTVKDIFTNPQHVTTKKFVNSAFAAKIPAEVQKELQRTGEIVTLSFIGNSSGEPALAVATKRFQVYPNILSGNITQLKHEAYGKLVIHMQGEQNEINHALSFLQEQGIIVEGGRTDYGKQVLFG.

The 240-residue stretch at 2–241 (IELKNVSKVF…PQHVTTKKFV (240 aa)) folds into the ABC transporter domain. Residue 38 to 45 (GYSGAGKS) participates in ATP binding.

This sequence belongs to the ABC transporter superfamily. Methionine importer (TC 3.A.1.24) family. In terms of assembly, the complex is composed of two ATP-binding proteins (MetN), two transmembrane proteins (MetI) and a solute-binding protein (MetQ).

Its subcellular location is the cell membrane. The enzyme catalyses L-methionine(out) + ATP + H2O = L-methionine(in) + ADP + phosphate + H(+). It catalyses the reaction D-methionine(out) + ATP + H2O = D-methionine(in) + ADP + phosphate + H(+). Functionally, part of the ABC transporter complex MetNIQ involved in methionine import. Responsible for energy coupling to the transport system. This chain is Methionine import ATP-binding protein MetN 1, found in Bacillus anthracis.